Consider the following 590-residue polypeptide: MVLHQFDYLLAIGTIFAALDAWNIGANDVANSWATSVAARSVTYLQAMILGSIMEFAGSVGVGARVADTIRTKVVDTTLFADDPALLMLGMVCAVVASSIYLTMATRFGLPVSTTHSIMGGVIGMGIAAVGADGVQWVGSSINDGVVSVFLAWVIAPGLAGAFASIIFLVTKYGVLLRSNPVYKAFVMVPIYFGITAALLCMLLLWKGGSYKVTLTNPEIAGTIIGVGAAWALLVTIFLMPWLYRIVILEDWQLRFWHIPLGPLLLRRGEVPPPPADGSGVVQDFYAGRLTKEQLAARRAAQNGDSEMAAGAVTSSTSNPSAPTDGEKGATITKDDSSYSHDHSEPAQAAQPQIKTMVGPRPAGPWHSGAVLFWYVKWALFRGVDQDVLSSQQEKSVISSDVEELHAHATHYDNKTEYMYSFLQIMTAAAASFTHGANDIANAIGPYATVFQLWKDGALPEKGKADVPVWILVFGASCLVIGLWTYGYNIMRNLGNRITLQSPSRGFSMELGSAVTVILATRLKLPVSTTQCITGATVGVGLCSGTWRTINWRLVAWIYMGWFITLPVAGIISGCLMGIIINAPRWGYSG.

8 consecutive transmembrane segments (helical) span residues 6–26 (FDYL…NIGA), 44–64 (YLQA…GVGA), 85–105 (ALLM…LTMA), 118–138 (IMGG…VQWV), 149–169 (VFLA…IIFL), 186–206 (FVMV…LLLW), 220–240 (IAGT…IFLM), and 246–266 (IVIL…PLLL). The Cytoplasmic portion of the chain corresponds to 267 to 466 (RRGEVPPPPA…GALPEKGKAD (200 aa)). The tract at residues 297-361 (ARRAAQNGDS…PQIKTMVGPR (65 aa)) is disordered. Positions 313-322 (VTSSTSNPSA) are enriched in polar residues. A compositionally biased stretch (basic and acidic residues) spans 325–345 (DGEKGATITKDDSSYSHDHSE). Helical transmembrane passes span 467 to 487 (VPVW…WTYG), 506 to 525 (GFSM…RLKL), 527 to 547 (VSTT…SGTW), and 561 to 581 (GWFI…GIII).

The protein belongs to the inorganic phosphate transporter (PiT) (TC 2.A.20) family.

It localises to the cell membrane. Phosphate transport activity is competitively inhibited by vanadate and arsenate. High-affinity transporter for external inorganic phosphate. Acts probably as a sodium-phosphate symporter. Component of the high affinity phosphate transport system II (ptsII) necessary for scavenging phosphorus from the environment under conditions of limiting phosphorus. This Neurospora crassa (strain ATCC 24698 / 74-OR23-1A / CBS 708.71 / DSM 1257 / FGSC 987) protein is Phosphate-repressible phosphate permease pho-4.